A 465-amino-acid polypeptide reads, in one-letter code: MRPQELPRLAFPLLLLLLLPPPPCPAHSATRFDPTWESLDARQLPAWFDQAKFGIFIHWGVFSVPSFGSEWFWWYWQKEKIPKYVEFMKDNYPPSFKYEDFGPLFTAKFFNANQWADIFQASGAKYIVLTSKHHKGFTLWGSEYSWNWNAIDEGPKRDIVKELEVAIRNRTDLRFGLYYSLFEWFHPLFLEDESSSFHKRQFPVSKTLPELYELVNNYQPEVLWSDGDGGAPDQYWNSTGFLAWLYNESPVRETVVTNDRWGAGSIYKHGGFYTCSDRYNPGHLLPHKWENCMTIDKLSWGYRREAGISDYLTIEELVKQLVETVSCGGNLLMNIGPTLDGTISVVFEERLRQMGSWLKVNGEAIYETHTWQSQNDTVTPDVWYTSKPKEKLVYAIFLKWPTSGQLFLGQPKAILGATEVKLLGHGQPLNWISLERNGIMVELPQLTIHQMPCKWGWALALTNVI.

The N-terminal stretch at 1 to 26 is a signal peptide; sequence MRPQELPRLAFPLLLLLLLPPPPCPA. Asn169 and Asn237 each carry an N-linked (GlcNAc...) asparagine glycan. The residue at position 299 (Ser299) is a Phosphoserine. N-linked (GlcNAc...) asparagine glycosylation is present at Asn375.

Belongs to the glycosyl hydrolase 29 family. Homotetramer.

It is found in the secreted. The catalysed reaction is an alpha-L-fucoside + H2O = L-fucose + an alcohol. Alpha-L-fucosidase is responsible for hydrolyzing the alpha-1,6-linked fucose joined to the reducing-end N-acetylglucosamine of the carbohydrate moieties of glycoproteins. This chain is Plasma alpha-L-fucosidase (FUCA2), found in Pongo abelii (Sumatran orangutan).